Consider the following 395-residue polypeptide: Multidrug resistance protein MdtL (395 aa).

12 consecutive transmembrane segments (helical) span residues 4–24 (FLLCSFALVLLYPAGIDMYLV), 42–62 (IAFSVYLAGMATAMLFAGKIA), 69–89 (PVAIVGALVFMTASLLCSRAS), 93–113 (LFLSGRFLQGVGAGGCYVVAF), 131–151 (LLNGITCIVPVLAPVMGHLIM), 158–178 (SLFYTMSAMGIIVGLLSLFIL), 217–237 (VSVILTFVNASPVLLMEVMGF), 247–267 (ALTAGVSMVVSFSTPFALGLF), 271–291 (TLMLVSQGLFLTAGVTLSLAH), 295–315 (VTLFGLTLICAGFSVGFGVAM), 328–350 (VASSTLGIAQVCGSSLWIWLAAI), and 355–377 (AMNMLIGILIGCSIVSILLIFSV).

Belongs to the major facilitator superfamily. DHA1 family. MdtL (TC 2.A.1.2.22) subfamily.

Its subcellular location is the cell inner membrane. The chain is Multidrug resistance protein MdtL from Salmonella schwarzengrund (strain CVM19633).